Here is a 582-residue protein sequence, read N- to C-terminus: MSEALETGDPSPPPPIVSENGKTYYYLNSQESQAPNTPSPQEVPPKKMTNLFESGPLVYEDVAADIEAVTERASRRHYENKMVVKNSREMFDNVNILPDGRYYCCLCNRPYKTHATLTAHLRGYHLRNESSCDEPGCNFLSFTDQEKKRHRRTHDKKKKERNSQESMVIHEKIQKAVRRLDYPGEDELRDHLNGSTEVQGTIRTMTKKGKIRYACLKCPHSVFNAYHAARHVEMHNDFPKNCFYCGEIRKGTVDLQVHYMRVHKHEGIRTFKCSVCHLRFTTTILFRDHVECENGCQNPEIRQDIYYGELPEGTIVDDLTQDRLQNFRKRQEIWKTMGQMVEEHRTDVHEEIVGESSVQAGDTTVFDGSRAFIQTPFGLKTALEVKNTSRFCPRSGKRTSDDDLMITNKKRERLEMAPNLHFHQDIIHRLPTSTTTQRQNNAFQNEYLRPPVSYGYDPLIGRYPDFQLMSQSSLPSSSASSSSYDPFATAVYQDSDRNPMQPNDQHICDMNNVGAYETANFGLDNSSDLVVNEATIASNLMVNEVEDEVFEELNKLDFVMPADDGNDNDDDLEEVFNFGNVA.

The interval methionine 1–glycine 21 is disordered. 3 consecutive C2H2-type zinc fingers follow at residues tyrosine 102 to histidine 125, serine 130 to histidine 154, and tyrosine 213 to histidine 235.

The protein resides in the nucleus. The polypeptide is Heterogeneous nuclear ribonucleoprotein C homolog (Caenorhabditis elegans).